Reading from the N-terminus, the 352-residue chain is Secreted RxLR effector protein 122 (352 aa).

The signal sequence occupies residues 1–21 (MRGAYYVLIALLVVASSQTSA). The short motif at 48 to 65 (QFLRGSRNVPGDLAHEER) is the RxLR-dEER element. The segment covering 280–290 (RGGTTGASRGT) has biased composition (low complexity). A disordered region spans residues 280–352 (RGGTTGASRG…VEPEGHRSKP (73 aa)). Positions 302 to 315 (AASTSKGKSSVFTE) are enriched in polar residues.

The protein belongs to the RxLR effector family.

It is found in the secreted. It localises to the host nucleus. In terms of biological role, secreted effector that acts as an elicitor that induces cell death in host plant cells. The chain is Secreted RxLR effector protein 122 from Plasmopara viticola (Downy mildew of grapevine).